Consider the following 330-residue polypeptide: Ketol-acid reductoisomerase (NADP(+)) (330 aa).

The KARI N-terminal Rossmann domain occupies 1–181; sequence MKVFYDSDFK…GLSRAGVIQT (181 aa). NADP(+)-binding positions include 24–27, Arg-47, Ser-52, and 82–85; these read YGSQ and DELQ. Residue His-107 is part of the active site. Gly-133 contacts NADP(+). One can recognise a KARI C-terminal knotted domain in the interval 182–327; sequence TFKEETETDL…AKLRKMCGLE (146 aa). The Mg(2+) site is built by Asp-190, Glu-194, Glu-226, and Glu-230. Ser-251 lines the substrate pocket.

Belongs to the ketol-acid reductoisomerase family. Requires Mg(2+) as cofactor.

The catalysed reaction is (2R)-2,3-dihydroxy-3-methylbutanoate + NADP(+) = (2S)-2-acetolactate + NADPH + H(+). It carries out the reaction (2R,3R)-2,3-dihydroxy-3-methylpentanoate + NADP(+) = (S)-2-ethyl-2-hydroxy-3-oxobutanoate + NADPH + H(+). It participates in amino-acid biosynthesis; L-isoleucine biosynthesis; L-isoleucine from 2-oxobutanoate: step 2/4. Its pathway is amino-acid biosynthesis; L-valine biosynthesis; L-valine from pyruvate: step 2/4. Its function is as follows. Involved in the biosynthesis of branched-chain amino acids (BCAA). Catalyzes an alkyl-migration followed by a ketol-acid reduction of (S)-2-acetolactate (S2AL) to yield (R)-2,3-dihydroxy-isovalerate. In the isomerase reaction, S2AL is rearranged via a Mg-dependent methyl migration to produce 3-hydroxy-3-methyl-2-ketobutyrate (HMKB). In the reductase reaction, this 2-ketoacid undergoes a metal-dependent reduction by NADPH to yield (R)-2,3-dihydroxy-isovalerate. The polypeptide is Ketol-acid reductoisomerase (NADP(+)) (Methanococcus maripaludis (strain C7 / ATCC BAA-1331)).